The following is a 477-amino-acid chain: MKKVELVFIPSPGAGHHLPTLQFVKRLIDRNDRISITILAIQSYFPTTLSSYTKSIAASEPRIRFIDVPQPQDRPPQEMYKSRAQIFSLYIESHVPSVKKIITNLVSSSANSSDSIRVAALVVDLFCVSMIDVAKELNIPSYLFLTSNAGYLAFMLHLPILHEKNQIAVEESDPDWSIPGIVHPVPPRVLPAALTDGRLSAYIKLASRFRETRGIIVNTFVELETHAITLFSNDDRVPPVYPVGPVIDLDDGQEHSNLDQAQRDKIIKWLDDQPQKSVVFLCFGSMGSFGAEQVKEIAVGLEQSGQRFLWSLRMPSPKGIVPSDCSNLEEVLPDGFLERTNGKKGLICGWAPQVEILAHSATGGFLSHCGWNSILESLWHGVPIATWPMYAEQQLNAFRMVRELGMALEMRLDYKAGSADVVGADEIEKAVVGVMEKDSEVRKKVEEMGKMARKAVKDGGSSFASVGRFIEDVIGQN.

UDP-alpha-D-glucose is bound by residues S285, 350 to 351 (WA), 368 to 376 (HCGWNSILE), and 390 to 393 (YAEQ).

This sequence belongs to the UDP-glycosyltransferase family.

Functionally, glycosyltransferase that possesses chalcone and flavonol 2'-O-glycosyltransferase activity. Converts phloretin to phlorizin (phloretin 2'-O-glucoside), a potent antioxidant. Possesses glycosyltransferase activity toward quercetin, isoliquiritigenin, butein and caffeic acid. This is UDP-glycosyltransferase 71K1 from Malus domestica (Apple).